Consider the following 258-residue polypeptide: 3-deoxy-manno-octulosonate cytidylyltransferase (258 aa).

Belongs to the KdsB family.

It localises to the cytoplasm. It carries out the reaction 3-deoxy-alpha-D-manno-oct-2-ulosonate + CTP = CMP-3-deoxy-beta-D-manno-octulosonate + diphosphate. Its pathway is nucleotide-sugar biosynthesis; CMP-3-deoxy-D-manno-octulosonate biosynthesis; CMP-3-deoxy-D-manno-octulosonate from 3-deoxy-D-manno-octulosonate and CTP: step 1/1. It functions in the pathway bacterial outer membrane biogenesis; lipopolysaccharide biosynthesis. In terms of biological role, activates KDO (a required 8-carbon sugar) for incorporation into bacterial lipopolysaccharide in Gram-negative bacteria. The polypeptide is 3-deoxy-manno-octulosonate cytidylyltransferase (Blochmanniella floridana).